Reading from the N-terminus, the 278-residue chain is Putative phosphoenolpyruvate synthase regulatory protein (278 aa).

ADP is bound at residue 158-165 (GVSRSGKT).

Belongs to the pyruvate, phosphate/water dikinase regulatory protein family. PSRP subfamily.

It catalyses the reaction [pyruvate, water dikinase] + ADP = [pyruvate, water dikinase]-phosphate + AMP + H(+). The enzyme catalyses [pyruvate, water dikinase]-phosphate + phosphate + H(+) = [pyruvate, water dikinase] + diphosphate. Bifunctional serine/threonine kinase and phosphorylase involved in the regulation of the phosphoenolpyruvate synthase (PEPS) by catalyzing its phosphorylation/dephosphorylation. This is Putative phosphoenolpyruvate synthase regulatory protein from Acinetobacter baumannii (strain AYE).